Consider the following 283-residue polypeptide: uncharacterized protein (283 aa).

6 helical membrane-spanning segments follow: residues 28–48 (LSSTSGAIGAIFGIILSILLI), 65–85 (LTSLIVASFGFLIALIIGFIL), 113–133 (LKRGFLYWIGNIILSIIFMIV), 135–155 (ILFIIFGVFLIFLPLVGIVFI), 200–220 (LNYIILLIIVGVIVIVINFVV), and 246–266 (IVDVISAVISAFVGFYTAVFA).

The protein to M.jannaschii MJ0233.

Its subcellular location is the cell membrane. This is an uncharacterized protein from Methanocaldococcus jannaschii (strain ATCC 43067 / DSM 2661 / JAL-1 / JCM 10045 / NBRC 100440) (Methanococcus jannaschii).